The chain runs to 424 residues: GTPase Obg (424 aa).

Positions 1–158 constitute an Obg domain; that stretch reads MFIDTAKIFV…RWIKLELKLL (158 aa). One can recognise an OBG-type G domain in the interval 159–331; that stretch reads ADVGLIGFPN…LMKEAARLLS (173 aa). Residues 165–172, 190–194, 212–215, 282–285, and 312–314 contribute to the GTP site; these read GFPNVGKS, FTTLK, DIPG, NKSD, and SAA. Serine 172 and threonine 192 together coordinate Mg(2+). An OCT domain is found at 345–424; sequence RFIEEEKRFT…LNDFEFDFLL (80 aa).

Belongs to the TRAFAC class OBG-HflX-like GTPase superfamily. OBG GTPase family. In terms of assembly, monomer. It depends on Mg(2+) as a cofactor.

The protein localises to the cytoplasm. An essential GTPase which binds GTP, GDP and possibly (p)ppGpp with moderate affinity, with high nucleotide exchange rates and a fairly low GTP hydrolysis rate. Plays a role in control of the cell cycle, stress response, ribosome biogenesis and in those bacteria that undergo differentiation, in morphogenesis control. The protein is GTPase Obg of Clostridium botulinum (strain ATCC 19397 / Type A).